Reading from the N-terminus, the 1272-residue chain is AF4/FMR2 family member 2 (1272 aa).

Disordered regions lie at residues 93–183, 201–225, and 283–302; these read IPKN…LTQD, QIGE…GEDA, and AYVR…PTLK. Polar residues predominate over residues 97 to 107; sequence SVPQNPNNKNE. Over residues 151–160 the composition is skewed to basic and acidic residues; that stretch reads SKPEWSRDSH. Residues 161–183 show a composition bias toward polar residues; it reads NPSTVLASQASGQPNKMQTLTQD. S391 bears the Phosphoserine mark. 4 disordered regions span residues 418 to 491, 535 to 687, 779 to 829, and 842 to 903; these read KAKP…KWQL, TNAS…DQEE, SLHA…PEKK, and PPCI…QDKN. Pro residues predominate over residues 426 to 438; that stretch reads VNPPLATPQPPPA. The segment covering 439–452 has biased composition (low complexity); sequence VQASGGSGSSSESE. Position 478 is a phosphothreonine (T478). A compositionally biased stretch (basic and acidic residues) spans 543–558; sequence EPKERPLLSLIREKAR. Residues 576-586 show a composition bias toward polar residues; it reads STTSETVSQRT. A compositionally biased stretch (basic and acidic residues) spans 616–629; it reads PKEKESVELHDPPR. Residues 630 to 640 show a composition bias toward basic residues; sequence GRNKATAHKPA. Basic and acidic residues predominate over residues 818–829; sequence PTEVAEKIPEKK. 2 stretches are compositionally biased toward pro residues: residues 844-853 and 874-883; these read CISPAPPHKP and FPPPLSPLPE.

This sequence belongs to the AF4 family.

The protein localises to the nucleus speckle. RNA-binding protein. Might be involved in alternative splicing regulation through an interaction with G-quartet RNA structure. In Pan troglodytes (Chimpanzee), this protein is AF4/FMR2 family member 2 (AFF2).